Reading from the N-terminus, the 331-residue chain is Lipoate-protein ligase LplJ (331 aa).

Positions 27-214 (DPEQQYLLFY…HIFNTNDVGN (188 aa)) constitute a BPL/LPL catalytic domain. ATP-binding positions include Arg-69, 74-77 (GAVY), and Lys-131. (R)-lipoate is bound at residue Lys-131.

It belongs to the LplA family.

The protein localises to the cytoplasm. The enzyme catalyses L-lysyl-[lipoyl-carrier protein] + (R)-lipoate + ATP = N(6)-[(R)-lipoyl]-L-lysyl-[lipoyl-carrier protein] + AMP + diphosphate + H(+). It functions in the pathway protein modification; protein lipoylation via exogenous pathway; protein N(6)-(lipoyl)lysine from lipoate: step 1/2. The protein operates within protein modification; protein lipoylation via exogenous pathway; protein N(6)-(lipoyl)lysine from lipoate: step 2/2. Its function is as follows. Catalyzes both the ATP-dependent activation of exogenously supplied lipoate to lipoyl-AMP and the transfer of the activated lipoyl onto the lipoyl domains of lipoate-dependent enzymes. Is also able to use octanoate as substrate. The chain is Lipoate-protein ligase LplJ (lplJ) from Bacillus subtilis (strain 168).